The primary structure comprises 474 residues: Bifunctional protein HldE (474 aa).

The ribokinase stretch occupies residues M1 to E318. N194–E197 lines the ATP pocket. Residue D263 is part of the active site. The segment at F343–G474 is cytidylyltransferase.

This sequence in the N-terminal section; belongs to the carbohydrate kinase PfkB family. It in the C-terminal section; belongs to the cytidylyltransferase family. As to quaternary structure, homodimer.

It catalyses the reaction D-glycero-beta-D-manno-heptose 7-phosphate + ATP = D-glycero-beta-D-manno-heptose 1,7-bisphosphate + ADP + H(+). The catalysed reaction is D-glycero-beta-D-manno-heptose 1-phosphate + ATP + H(+) = ADP-D-glycero-beta-D-manno-heptose + diphosphate. The protein operates within nucleotide-sugar biosynthesis; ADP-L-glycero-beta-D-manno-heptose biosynthesis; ADP-L-glycero-beta-D-manno-heptose from D-glycero-beta-D-manno-heptose 7-phosphate: step 1/4. It functions in the pathway nucleotide-sugar biosynthesis; ADP-L-glycero-beta-D-manno-heptose biosynthesis; ADP-L-glycero-beta-D-manno-heptose from D-glycero-beta-D-manno-heptose 7-phosphate: step 3/4. Its function is as follows. Catalyzes the phosphorylation of D-glycero-D-manno-heptose 7-phosphate at the C-1 position to selectively form D-glycero-beta-D-manno-heptose-1,7-bisphosphate. In terms of biological role, catalyzes the ADP transfer from ATP to D-glycero-beta-D-manno-heptose 1-phosphate, yielding ADP-D-glycero-beta-D-manno-heptose. The protein is Bifunctional protein HldE of Pseudomonas savastanoi pv. phaseolicola (strain 1448A / Race 6) (Pseudomonas syringae pv. phaseolicola (strain 1448A / Race 6)).